We begin with the raw amino-acid sequence, 713 residues long: Calpastatin (713 aa).

Over residues 1 to 21 the composition is skewed to low complexity; that stretch reads MSRPGPKPAASSRPRRGAAAS. The disordered stretch occupies residues 1-152; sequence MSRPGPKPAA…SADGESVAGG (152 aa). The segment covering 47-64 has biased composition (polar residues); the sequence is VTASSAATGTSPRMSTTG. At serine 57 the chain carries Phosphoserine. Lysine 69 is covalently cross-linked (Glycyl lysine isopeptide (Lys-Gly) (interchain with G-Cter in SUMO2)). Lysine 86 is modified (N6-acetyllysine). Polar residues predominate over residues 120 to 129; it reads SRSNEQIVSE. Phosphoserine is present on residues serine 122 and serine 171. Threonine 173 is modified (phosphothreonine). One copy of the Inhibitory domain 1 repeat lies at 208 to 260; that stretch reads TNKDDPPYTGPVVLDPMDSTYLEALGIKEGTIPPEYRKLLEKNEAITGPLPDS. The segment at 253-402 is disordered; the sequence is ITGPLPDSPK…PEETSKCLSE (150 aa). Phosphoserine is present on residues serine 260 and serine 281. Polar residues-rich tracts occupy residues 275–285, 294–304, and 326–346; these read SDFTCSSPTGK, GESSKAQSAGV, and QALQ…QSHL. The stretch at 341 to 393 is one Inhibitory domain 2 repeat; sequence DPQSHLRQAKQVKEAKAKEERQEKCGEDEDTVPAEYRLKPAKDKDGKPLLPEP. Basic and acidic residues-rich tracts occupy residues 351–365 and 376–387; these read QVKE…QEKC and YRLKPAKDKDGK. A phosphoserine mark is found at serine 401, serine 403, serine 410, and serine 445. The tract at residues 442 to 507 is disordered; it reads LARSLGTRKE…PLLPKEAEEQ (66 aa). Residues 448-505 show a composition bias toward basic and acidic residues; that stretch reads TRKEDPEDEKSLVDKVKEKAKEEDHEKLGEKEETIPPDYRLEIVKDKDGKPLLPKEAE. An Inhibitory domain 3 repeat occupies 451–504; it reads EDPEDEKSLVDKVKEKAKEEDHEKLGEKEETIPPDYRLEIVKDKDGKPLLPKEA. Phosphoserine is present on residues serine 521 and serine 532. A compositionally biased stretch (polar residues) spans 544–558; sequence VSETVSQVPAPSNHT. Residues 544-713 form a disordered region; that stretch reads VSETVSQVPA…PKPKVDEDAT (170 aa). Residues serine 580 and serine 582 each carry the phosphoserine modification. Residues 588 to 641 form an Inhibitory domain 4 repeat; it reads PDPDENKPLDDKVKEKIKAEHSEKLGERDDTIPPEYRHLLDNDGKDKPEKPLTK. Basic and acidic residues-rich tracts occupy residues 588-648 and 687-713; these read PDPD…KLGQ and SKNE…EDAT.

This sequence belongs to the protease inhibitor I27 (calpastatin) family.

In terms of biological role, specific inhibition of calpain (calcium-dependent cysteine protease). Plays a key role in postmortem tenderization of meat and have been proposed to be involved in muscle protein degradation in living tissue. This chain is Calpastatin (Cast), found in Rattus norvegicus (Rat).